A 1710-amino-acid chain; its full sequence is Extracellular matrix protein A (1710 aa).

The first 22 residues, 1–22 (MKISIFILLLFISSMVIISVNA), serve as a signal peptide directing secretion. Cys-rich CT repeat units lie at residues 43–70 (NRWS…CDDE), 71–94 (NACT…VDDK), 95–117 (NPCT…CDDK), 118–141 (NACT…CDDN), 142–165 (NPCT…VDDN), 166–189 (NPCT…VDDL), 190–213 (NPCT…VDDN), 214–237 (NKCT…CDDN), 238–261 (NACT…CDDK), 262–285 (NPCT…VDDN), 286–309 (NPCT…VDDN), 310–333 (NQCT…TDDN), 334–357 (NPCT…VDDN), 358–381 (NKCT…TDDN), 382–405 (NACT…CDDK), 406–429 (KACT…CDDN), 430–453 (NPCT…VDDN), 454–477 (NPCT…VDDN), 478–501 (NKCT…TDDN), 502–525 (NACT…CDDK), 526–549 (KACT…CDDN), 550–573 (NPCT…VDDN), 574–597 (NPCT…VDDN), 598–621 (NKCT…TDDN), 622–645 (NACT…CDDS), 646–669 (NPCT…VDDN), 670–693 (NPCT…VDDN), 694–717 (NKCT…TDDN), 718–741 (NACT…CDDK), 742–765 (KACT…CDDN), 766–789 (NPCT…VDDN), 790–813 (NPCT…VDDN), 814–837 (NKCT…TDDN), 838–861 (NACT…CDDN), 862–885 (NKCT…CDDS), 886–909 (NPCT…VDDN), 910–933 (NPCT…VDDN), 934–957 (NKCT…TDDN), 958–981 (NACT…TDDN), 982–1005 (NACT…CDDS), 1006–1029 (NPCT…VDDN), 1030–1053 (NPCT…VDDN), 1054–1077 (NKCT…TDDN), 1078–1101 (NACT…CDDS), 1102–1125 (NPCT…VDDN), 1126–1149 (NPCT…VDDN), 1150–1173 (NKCT…CDDN), 1174–1197 (NACT…CDDR), 1198–1221 (NPCT…TDDS), 1222–1245 (NKCT…CDDN), 1246–1269 (NACT…CDDK), 1270–1293 (NPCT…VDDN), 1294–1317 (DKCT…CDDN), 1318–1341 (NACT…CDDS), 1342–1365 (NPCT…VDDN), 1366–1389 (NPCT…VDDN), 1390–1413 (NKCT…CDDN), 1414–1437 (NPCT…VDDN), 1438–1461 (DACT…TDDN), 1462–1485 (NKCT…CDDG), 1486–1509 (NKCT…CPKP), 1511–1534 (DKCS…CTSD), 1558–1581 (NKCQ…CDDG), 1582–1606 (NACT…LPKN), 1608–1632 (NKCI…CECD), and 1658–1682 (NPKT…VITS). N-linked (GlcNAc...) asparagine glycans are attached at residues Asn-150 and Asn-151. 2 N-linked (GlcNAc...) asparagine glycosylation sites follow: Asn-270 and Asn-271. The N-linked (GlcNAc...) asparagine glycan is linked to Asn-415. N-linked (GlcNAc...) asparagine glycosylation occurs at Asn-535. Residue Asn-655 is glycosylated (N-linked (GlcNAc...) asparagine). An N-linked (GlcNAc...) asparagine glycan is attached at Asn-751. Asn-871, Asn-894, and Asn-895 each carry an N-linked (GlcNAc...) asparagine glycan. Asn-1015 is a glycosylation site (N-linked (GlcNAc...) asparagine). N-linked (GlcNAc...) asparagine glycans are attached at residues Asn-1110 and Asn-1111. An N-linked (GlcNAc...) asparagine glycan is attached at Asn-1183. Asn-1255 carries N-linked (GlcNAc...) asparagine glycosylation. N-linked (GlcNAc...) asparagine glycosylation is present at Asn-1351. The N-linked (GlcNAc...) asparagine glycan is linked to Asn-1530. Asn-1624 carries N-linked (GlcNAc...) asparagine glycosylation.

The protein localises to the secreted. The sequence is that of Extracellular matrix protein A (ecmA) from Dictyostelium discoideum (Social amoeba).